The following is a 486-amino-acid chain: GDP-Man:Man(3)GlcNAc(2)-PP-Dol alpha-1,2-mannosyltransferase (486 aa).

Topologically, residues 1 to 16 (MAGPMCLCGMMRLLTA) are lumenal. A helical membrane pass occupies residues 17–37 (LFIPVLITSVGLCLIFVLLFI). Residues 38–229 (CTRLWVQRKK…SNNPVLSRLK (192 aa)) are Cytoplasmic-facing. Positions 230–250 (LIYYYLFALFYGWVGSCSDVI) form an intramembrane region, helical. Topologically, residues 251–393 (MVNSTWTFSH…IGLHTMWNEH (143 aa)) are cytoplasmic. The segment at residues 394-414 (FGIGIVECMAAGTIILAHNSG) is an intramembrane region (helical). Residues 415–486 (GPKLDIVVPH…FLASSEPLFK (72 aa)) lie on the Cytoplasmic side of the membrane.

This sequence belongs to the glycosyltransferase group 1 family. Glycosyltransferase 4 subfamily.

Its subcellular location is the endoplasmic reticulum membrane. The catalysed reaction is an alpha-D-Man-(1-&gt;3)-[alpha-D-Man-(1-&gt;6)]-beta-D-Man-(1-&gt;4)-beta-D-GlcNAc-(1-&gt;4)-alpha-D-GlcNAc-diphospho-di-trans,poly-cis-dolichol + 2 GDP-alpha-D-mannose = an alpha-D-Man-(1-&gt;2)-alpha-D-Man-(1-&gt;2)-alpha-D-Man-(1-&gt;3)-[alpha-D-Man-(1-&gt;6)]-beta-D-Man-(1-&gt;4)-beta-D-GlcNAc-(1-&gt;4)-alpha-D-GlcNAc-diphospho-di-trans,poly-cis-dolichol + 2 GDP + 2 H(+). The protein operates within protein modification; protein glycosylation. In terms of biological role, GDP-Man:Man(3)GlcNAc(2)-PP-Dol alpha-1,2-mannosyltransferase that operates in the biosynthetic pathway of dolichol-linked oligosaccharides, the glycan precursors employed in protein asparagine (N)-glycosylation. The assembly of dolichol-linked oligosaccharides begins on the cytosolic side of the endoplasmic reticulum membrane and finishes in its lumen. The sequential addition of sugars to dolichol pyrophosphate produces dolichol-linked oligosaccharides containing fourteen sugars, including two GlcNAcs, nine mannoses and three glucoses. Once assembled, the oligosaccharide is transferred from the lipid to nascent proteins by oligosaccharyltransferases. Catalyzes, on the cytoplasmic face of the endoplasmic reticulum, the addition of the fourth and fifth mannose residues to the dolichol-linked oligosaccharide chain, to produce Man(5)GlcNAc(2)-PP-dolichol core oligosaccharide. Man(5)GlcNAc(2)-PP-dolichol is a substrate for ALG3, the following enzyme in the biosynthetic pathway. This is GDP-Man:Man(3)GlcNAc(2)-PP-Dol alpha-1,2-mannosyltransferase (alg11) from Xenopus laevis (African clawed frog).